A 78-amino-acid chain; its full sequence is Small ribosomal subunit protein bS16c (78 aa).

This sequence belongs to the bacterial ribosomal protein bS16 family.

Its subcellular location is the plastid. It localises to the chloroplast. This is Small ribosomal subunit protein bS16c from Adiantum capillus-veneris (Maidenhair fern).